The primary structure comprises 748 residues: 5-methyltetrahydropteroyltriglutamate--homocysteine methyltransferase (748 aa).

Position 111 (lysine 111) interacts with 5-methyltetrahydropteroyltri-L-glutamate. L-homocysteine is bound by residues 428–430 (IGS) and glutamate 478. L-methionine-binding positions include 428–430 (IGS) and glutamate 478. Residues 509–510 (RC) and tryptophan 555 contribute to the 5-methyltetrahydropteroyltri-L-glutamate site. Aspartate 593 contacts L-homocysteine. Aspartate 593 lines the L-methionine pocket. Glutamate 599 lines the 5-methyltetrahydropteroyltri-L-glutamate pocket. Residues histidine 635, cysteine 637, and glutamate 659 each contribute to the Zn(2+) site. Catalysis depends on histidine 687, which acts as the Proton donor. A Zn(2+)-binding site is contributed by cysteine 719.

It belongs to the vitamin-B12 independent methionine synthase family. It depends on Zn(2+) as a cofactor.

It catalyses the reaction 5-methyltetrahydropteroyltri-L-glutamate + L-homocysteine = tetrahydropteroyltri-L-glutamate + L-methionine. The protein operates within amino-acid biosynthesis; L-methionine biosynthesis via de novo pathway; L-methionine from L-homocysteine (MetE route): step 1/1. Its function is as follows. Catalyzes the transfer of a methyl group from 5-methyltetrahydrofolate to homocysteine resulting in methionine formation. This Herpetosiphon aurantiacus (strain ATCC 23779 / DSM 785 / 114-95) protein is 5-methyltetrahydropteroyltriglutamate--homocysteine methyltransferase.